The primary structure comprises 28 residues: Cycloviolin-B (28 aa).

Positions 1–28 (GTACGESCYVLPCFTVGCTCTSSQCFKN) form a cross-link, cyclopeptide (Gly-Asn). Disulfide bonds link C4/C18, C8/C20, and C13/C25.

This is a cyclic peptide.

Probably participates in a plant defense mechanism. Has anti-HIV activity. In Leonia cymosa (Sacha uba), this protein is Cycloviolin-B.